A 475-amino-acid chain; its full sequence is 3-isopropylmalate dehydratase large subunit (475 aa).

Residues C347, C407, and C410 each coordinate [4Fe-4S] cluster. The disordered stretch occupies residues 418–442 (LAPGERSASTSNRNFEGRQGKGGRT).

Belongs to the aconitase/IPM isomerase family. LeuC type 1 subfamily. Heterodimer of LeuC and LeuD. Requires [4Fe-4S] cluster as cofactor.

The catalysed reaction is (2R,3S)-3-isopropylmalate = (2S)-2-isopropylmalate. It participates in amino-acid biosynthesis; L-leucine biosynthesis; L-leucine from 3-methyl-2-oxobutanoate: step 2/4. Its function is as follows. Catalyzes the isomerization between 2-isopropylmalate and 3-isopropylmalate, via the formation of 2-isopropylmaleate. The protein is 3-isopropylmalate dehydratase large subunit of Streptomyces griseus subsp. griseus (strain JCM 4626 / CBS 651.72 / NBRC 13350 / KCC S-0626 / ISP 5235).